The following is a 413-amino-acid chain: uncharacterized protein (413 aa).

The next 12 helical transmembrane spans lie at 42–62 (FLGG…LPVF), 75–95 (LSLS…GPLS), 109–129 (LIAA…VIVF), 133–153 (LTGL…VEEV), 157–179 (SVSF…GRIL), 191–211 (IAFI…LYFL), 238–258 (PTLL…ITIF), 265–285 (LMLS…IIYL), 304–324 (SSIL…TQYN), 326–346 (IFII…SHSI), 362–382 (ATSL…TFGG), and 383–403 (FFWF…ILIF).

Belongs to the major facilitator superfamily.

It localises to the cell membrane. This is an uncharacterized protein from Buchnera aphidicola subsp. Schizaphis graminum (strain Sg).